A 128-amino-acid polypeptide reads, in one-letter code: Glycine cleavage system H protein (128 aa).

The region spanning 24–106 (VFCVGITDHA…YDEGWLFRIR (83 aa)) is the Lipoyl-binding domain. K65 carries the N6-lipoyllysine modification.

The protein belongs to the GcvH family. The glycine cleavage system is composed of four proteins: P, T, L and H. (R)-lipoate serves as cofactor.

Functionally, the glycine cleavage system catalyzes the degradation of glycine. The H protein shuttles the methylamine group of glycine from the P protein to the T protein. This Edwardsiella ictaluri (strain 93-146) protein is Glycine cleavage system H protein.